Here is a 154-residue protein sequence, read N- to C-terminus: Large ribosomal subunit protein uL13 (154 aa).

The protein belongs to the universal ribosomal protein uL13 family. Part of the 50S ribosomal subunit.

This protein is one of the early assembly proteins of the 50S ribosomal subunit, although it is not seen to bind rRNA by itself. It is important during the early stages of 50S assembly. The protein is Large ribosomal subunit protein uL13 of Brucella suis (strain ATCC 23445 / NCTC 10510).